The primary structure comprises 789 residues: Disintegrin and metalloproteinase domain-containing protein 7 (789 aa).

An N-terminal signal peptide occupies residues 1–23; that stretch reads MLTTGIFWMTVLISHIQERGIVG. The propeptide occupies 24–176; it reads VEGQELVHPK…NHSCVGLNFT (153 aa). Over 24-667 the chain is Extracellular; it reads VEGQELVHPK…EWGEALNLTS (644 aa). N-linked (GlcNAc...) asparagine glycosylation is found at Asn84, Asn167, and Asn174. A Peptidase M12B domain is found at 199–393; the sequence is KFIELFVVAD…QKPACILNNP (195 aa). 4 disulfide bridges follow: Cys310-Cys388, Cys350-Cys372, Cys352-Cys357, and Cys459-Cys479. The Disintegrin domain occupies 401–487; the sequence is YPFCGNKKVD…ECPKDEFQAN (87 aa). Residues Asn583, Asn628, and Asn664 are each glycosylated (N-linked (GlcNAc...) asparagine). Residues 668–689 form a helical membrane-spanning segment; sequence VSIMVIVLVMVIIGVGLVILLI. Topologically, residues 690 to 789 are cytoplasmic; the sequence is RYQKCIKMKQ…DTQSGCERLG (100 aa). Positions 764–789 are disordered; the sequence is RGIADPKQTDNVNLNLDTQSGCERLG. Residues 772–789 are compositionally biased toward polar residues; the sequence is TDNVNLNLDTQSGCERLG.

In terms of assembly, interacts with ITM2B in sperm; the interaction increases following capacitation. Interacts with HSPA5 and CANX. In terms of tissue distribution, expressed in both the head and tails of sperm (at protein level). Expressed in the epididymis (at protein level). Abundantly expressed in the apical region of the proximal caput epididymal epithelium, with decreasing expression in the mid and distal caput epididymal epithelium.

The protein localises to the membrane. Its function is as follows. Required for normal male fertility via maintenance of epithelial cell morphology in the caput epididymis and subsequently correct epididymis lumen structure required for sperm development. Plays a role in sperm motility, flagella morphology and tyrosine phosphorylation during sperm capacitance. Plays a role in normal expression levels of HSPA5, ITM2B and ADAM2 in sperm both prior to and post-capacitation. This is a non catalytic metalloprotease-like protein. The protein is Disintegrin and metalloproteinase domain-containing protein 7 of Mus musculus (Mouse).